The primary structure comprises 1285 residues: Nuclear pore complex protein NUP133 (1285 aa).

Disordered stretches follow at residues 1–53 and 522–580; these read MFSP…PAPW and EPPE…QTAR. Residues 31-41 show a composition bias toward polar residues; it reads TPATQNRNNFI. Basic and acidic residues-rich tracts occupy residues 523–544 and 553–569; these read PPER…DETR and TAGR…DKGN.

It belongs to the nucleoporin Nup133 family. Part of the nuclear pore complex (NPC). The NPC has an eight-fold symmetrical structure comprising a central transport channel and two rings, the cytoplasmic and nuclear rings, to which eight filaments are attached. The cytoplasmic filaments have loose ends, while the nuclear filaments are joined in a distal ring, forming a nuclear basket. NPCs are highly dynamic in configuration and composition, and can be devided in 3 subcomplexes, the NUP62 subcomplex, the NUP107-160 subcomplex and the NUP93 subcomplex, containing approximately 30 different nucleoporin proteins.

It localises to the nucleus envelope. It is found in the nucleus. The protein resides in the nuclear pore complex. In Arabidopsis thaliana (Mouse-ear cress), this protein is Nuclear pore complex protein NUP133.